The sequence spans 98 residues: MTTSPTTISTTTAATTTTTTPGKGTDSPMVYIEAMLFSMLVLILLIIVCAGYVHVKNLYYRSRYGVTAIYQQVEAECRGVSLGRSVDEPPYQSIYMPD.

The span at 1–21 (MTTSPTTISTTTAATTTTTTP) shows a compositional bias: low complexity. The interval 1–26 (MTTSPTTISTTTAATTTTTTPGKGTD) is disordered. The helical transmembrane segment at 29 to 49 (MVYIEAMLFSMLVLILLIIVC) threads the bilayer.

It localises to the host membrane. This is an uncharacterized protein from Equine herpesvirus 2 (strain 86/87) (EHV-2).